The chain runs to 60 residues: Large ribosomal subunit protein bL32 (60 aa).

The protein belongs to the bacterial ribosomal protein bL32 family.

The sequence is that of Large ribosomal subunit protein bL32 from Paramagnetospirillum magneticum (strain ATCC 700264 / AMB-1) (Magnetospirillum magneticum).